Consider the following 271-residue polypeptide: Imidazole glycerol phosphate synthase subunit HisF (271 aa).

Active-site residues include aspartate 12 and aspartate 131.

The protein belongs to the HisA/HisF family. As to quaternary structure, heterodimer of HisH and HisF.

Its subcellular location is the cytoplasm. The enzyme catalyses 5-[(5-phospho-1-deoxy-D-ribulos-1-ylimino)methylamino]-1-(5-phospho-beta-D-ribosyl)imidazole-4-carboxamide + L-glutamine = D-erythro-1-(imidazol-4-yl)glycerol 3-phosphate + 5-amino-1-(5-phospho-beta-D-ribosyl)imidazole-4-carboxamide + L-glutamate + H(+). Its pathway is amino-acid biosynthesis; L-histidine biosynthesis; L-histidine from 5-phospho-alpha-D-ribose 1-diphosphate: step 5/9. Its function is as follows. IGPS catalyzes the conversion of PRFAR and glutamine to IGP, AICAR and glutamate. The HisF subunit catalyzes the cyclization activity that produces IGP and AICAR from PRFAR using the ammonia provided by the HisH subunit. The polypeptide is Imidazole glycerol phosphate synthase subunit HisF (Methanospirillum hungatei JF-1 (strain ATCC 27890 / DSM 864 / NBRC 100397 / JF-1)).